The primary structure comprises 203 residues: Lipoprotein MlpJ (203 aa).

The signal sequence occupies residues 1 to 17 (MKIINILFCISLLLLNS). A lipid anchor (N-palmitoyl cysteine) is attached at Cys-18. Residue Cys-18 is the site of S-diacylglycerol cysteine attachment. The tract at residues 26 to 47 (LKNNAQQTKSRKKRDLSQEELP) is disordered.

The protein belongs to the Multicopy lipoprotein (Mlp) family.

Its subcellular location is the cell outer membrane. In terms of biological role, an outer membrane protein that may participate in pathogenesis. Some human Lyme disease patients have antibodies against this protein. The Mlp proteins probably undergo intragenic recombination, generating new alleles. This Borreliella burgdorferi (strain ATCC 35210 / DSM 4680 / CIP 102532 / B31) (Borrelia burgdorferi) protein is Lipoprotein MlpJ.